The sequence spans 437 residues: Putative permease IIC component (437 aa).

Residues 2 to 437 form the PTS EIIC type-2 domain; it reads FDYILSLGGT…LFLRKRELSE (436 aa). Transmembrane regions (helical) follow at residues 5 to 25, 35 to 55, 88 to 108, 134 to 154, 173 to 193, 215 to 235, 236 to 256, 302 to 322, 325 to 345, 354 to 374, 385 to 405, and 410 to 430; these read ILSL…GLIF, AGVT…MAID, ATAI…AMLV, LMTG…ALSL, ISIP…LDAI, GMVG…GLAA, GEGF…MVLF, TIAV…ILPG, VLPL…TVIH, ISGV…APYF, FAGE…GWSI, and SLGI…VLFL.

Its subcellular location is the cell inner membrane. In terms of biological role, the phosphoenolpyruvate-dependent sugar phosphotransferase system (PTS), a major carbohydrate active -transport system, catalyzes the phosphorylation of incoming sugar substrates concomitant with their translocation across the cell membrane. The protein is Putative permease IIC component (sgcC) of Escherichia coli (strain K12).